A 376-amino-acid chain; its full sequence is DNA polymerase IV (376 aa).

One can recognise a UmuC domain in the interval 6-187 (IIHIDMDAFF…LSIGKFYGVG (182 aa)). Mg(2+) contacts are provided by aspartate 10 and aspartate 105. Residue glutamate 106 is part of the active site.

Belongs to the DNA polymerase type-Y family. In terms of assembly, monomer. It depends on Mg(2+) as a cofactor.

The protein localises to the cytoplasm. The enzyme catalyses DNA(n) + a 2'-deoxyribonucleoside 5'-triphosphate = DNA(n+1) + diphosphate. Functionally, poorly processive, error-prone DNA polymerase involved in untargeted mutagenesis. Copies undamaged DNA at stalled replication forks, which arise in vivo from mismatched or misaligned primer ends. These misaligned primers can be extended by PolIV. Exhibits no 3'-5' exonuclease (proofreading) activity. May be involved in translesional synthesis, in conjunction with the beta clamp from PolIII. The polypeptide is DNA polymerase IV (Desulfotalea psychrophila (strain LSv54 / DSM 12343)).